Reading from the N-terminus, the 1288-residue chain is Photoreceptor cilium actin regulator (1288 aa).

The N-myristoyl glycine moiety is linked to residue Gly-2. A lipid anchor (S-palmitoyl cysteine) is attached at Cys-3. 9 disordered regions span residues 78 to 147, 368 to 401, 423 to 453, 467 to 527, 563 to 605, 686 to 707, 813 to 1109, 1132 to 1169, and 1190 to 1288; these read MGDP…KWKR, QTSWDLAPEPEEWKSVTSPHTEARQSGHTWQQSP, QPRAQDEARSPCLSSTSPENITSPPLKLGTS, PHLS…PFQA, DWSE…SHVE, QKCNPHPEDEQGKAGKLPNAIP, AAKS…EDSQ, EAKPPLSTAHPLTPPSLPPEAGGPLGNPAECWKNSSGP, and LRRT…EEVS. Composition is skewed to polar residues over residues 96–109, 382–401, and 434–453; these read TKTSSSQLNKSQSH, SVTSPHTEARQSGHTWQQSP, and CLSSTSPENITSPPLKLGTS. Over residues 483 to 495 the composition is skewed to acidic residues; that stretch reads DSEDSSPEEEEED. Composition is skewed to polar residues over residues 848-857, 894-904, 927-946, and 966-976; these read SPESSKSTEN, SKSTASLTKPH, PPATSQSPEVKGGTWSQAEK, and PSGQNRTSESS. Residues 1018–1028 are compositionally biased toward low complexity; sequence PAQPSPSAVQT. Pro residues-rich tracts occupy residues 1051–1063 and 1071–1094; these read PHQPKLPNPPPES and PSPPTQHPEASPPFSIPSPSPPMS. Residues 1097–1106 are compositionally biased toward basic and acidic residues; sequence QEHKETRDSE. Over residues 1209 to 1226 the composition is skewed to polar residues; that stretch reads DPTSTSYESQLGQNSSSE. The segment covering 1268–1277 has biased composition (basic and acidic residues); that stretch reads RTGHIQDKSQ. Positions 1278 to 1288 are enriched in polar residues; the sequence is PEAQPQQEEVS.

As to expression, specifically expressed in retina.

Its subcellular location is the cell projection. The protein resides in the cilium. It is found in the photoreceptor outer segment. It localises to the photoreceptor inner segment. Its function is as follows. Plays an essential role for normal photoreceptor cell maintenance and vision. The sequence is that of Photoreceptor cilium actin regulator from Homo sapiens (Human).